The sequence spans 191 residues: dCTP deaminase (191 aa).

DCTP is bound by residues 112–117, 136–138, Q157, Y173, and Q183; these read KSTYAR and TLE. The active-site Proton donor/acceptor is the E138.

It belongs to the dCTP deaminase family. In terms of assembly, homotrimer.

It carries out the reaction dCTP + H2O + H(+) = dUTP + NH4(+). It participates in pyrimidine metabolism; dUMP biosynthesis; dUMP from dCTP (dUTP route): step 1/2. Its function is as follows. Catalyzes the deamination of dCTP to dUTP. The polypeptide is dCTP deaminase (Xylella fastidiosa (strain M12)).